The sequence spans 570 residues: Phytoene desaturase (570 aa).

Residues 547–567 (LFQGFLGALVAILLAYYYLVI) traverse the membrane as a helical segment.

Belongs to the carotenoid/retinoid oxidoreductase family. The cofactor is NAD(+).

The protein resides in the membrane. It catalyses the reaction 15-cis-phytoene + A = all-trans-phytofluene + AH2. The enzyme catalyses all-trans-phytofluene + A = all-trans-zeta-carotene + AH2. The catalysed reaction is all-trans-zeta-carotene + A = all-trans-neurosporene + AH2. It carries out the reaction all-trans-neurosporene + A = all-trans-lycopene + AH2. It functions in the pathway carotenoid biosynthesis. Phytoene desaturase; part of the car gene cluster that mediates the biosynthesis of neurosporaxanthin, a carboxylic apocarotenoid acting as an essential protective pigments and leading to orange pigmentation. Converts phytoene into lycopene via the intermediates phytofluene, zeta-carotene and neurosporene; and further desaturates gamma-carotene into torulene. Neurosporaxanthin is synthesized from geranyl-geranyl pyrophosphate (GGPP) through several enzymatic activities. Phytoene synthase activity performed by the bifunctional enzyme carAR first produces phytoene from geranyl-geranyl pyrophosphate (GGPP). The phytoene dehydrogenase carB then introduces 4 desaturations to lead to lycopene which is substrate of the carotene cyclase activity of carAR that leads to the production of gamma-carotene. CarB then performs a 5th desaturation reaction to yield torulene. Torulene is the substrate of the dioxidase carT that breaks the molecule, removing five carbon atoms to yield beta-apo-4'-carotenal, whereas the aldehyde dehydrogenase carD mediates the last step by converting beta-apo-4'-carotenal into neurosporaxanthin. The chain is Phytoene desaturase from Fusarium fujikuroi (Bakanae and foot rot disease fungus).